A 69-amino-acid chain; its full sequence is Large ribosomal subunit protein bL31 (69 aa).

This sequence belongs to the bacterial ribosomal protein bL31 family. Type A subfamily. In terms of assembly, part of the 50S ribosomal subunit.

In terms of biological role, binds the 23S rRNA. The sequence is that of Large ribosomal subunit protein bL31 from Mycoplasmopsis pulmonis (strain UAB CTIP) (Mycoplasma pulmonis).